The following is a 262-amino-acid chain: Phosphatidylglycerol--prolipoprotein diacylglyceryl transferase (262 aa).

The next 4 membrane-spanning stretches (helical) occupy residues Leu17–Gly37, Leu57–Tyr77, Gly95–His115, and Leu119–Gly139. Arg140 contacts a 1,2-diacyl-sn-glycero-3-phospho-(1'-sn-glycerol). Transmembrane regions (helical) follow at residues Pro173 to Tyr193, Ala200 to Phe220, and Phe227 to Leu247.

This sequence belongs to the Lgt family.

It localises to the cell inner membrane. It carries out the reaction L-cysteinyl-[prolipoprotein] + a 1,2-diacyl-sn-glycero-3-phospho-(1'-sn-glycerol) = an S-1,2-diacyl-sn-glyceryl-L-cysteinyl-[prolipoprotein] + sn-glycerol 1-phosphate + H(+). Its pathway is protein modification; lipoprotein biosynthesis (diacylglyceryl transfer). In terms of biological role, catalyzes the transfer of the diacylglyceryl group from phosphatidylglycerol to the sulfhydryl group of the N-terminal cysteine of a prolipoprotein, the first step in the formation of mature lipoproteins. The protein is Phosphatidylglycerol--prolipoprotein diacylglyceryl transferase of Bordetella bronchiseptica (strain ATCC BAA-588 / NCTC 13252 / RB50) (Alcaligenes bronchisepticus).